The chain runs to 378 residues: MTTQFSVAGVELELLRYPAQQESNLQAWDAADEHLLKSLIESEQAAVPTAIINDSFGALSCSVSKLNPSWPLCVETDARTSFLGTEQNHGRNQLPLDNLQWFTSRDTLPENLALVLMKLPKNLSYFAHQLTRLSQVLPAGTRILVAAKAKSINGALLDVFAKHLGPASASLAWKNTRVITCISDGKPRPLAKEVTWAVPEYQLEISNLSNVFAANKLDIGARIMLENLPKGDFKSIVDLGCGNGVLGLRTAQLFPEADIHFIDDSEMAVASAKANWARNQLPADKGHFYWDDCMTHLPEEVQPDLVLCNPPFHQGEAITDHIAWQMFLDARRRLKDGGILHIVGNRHLAYHVKLQRLFKNCTTVASNGKFVILQAQKK.

Belongs to the methyltransferase superfamily. RlmG family.

It is found in the cytoplasm. The enzyme catalyses guanosine(1835) in 23S rRNA + S-adenosyl-L-methionine = N(2)-methylguanosine(1835) in 23S rRNA + S-adenosyl-L-homocysteine + H(+). Its function is as follows. Specifically methylates the guanine in position 1835 (m2G1835) of 23S rRNA. The protein is Ribosomal RNA large subunit methyltransferase G of Shewanella baltica (strain OS155 / ATCC BAA-1091).